A 297-amino-acid polypeptide reads, in one-letter code: Phosphoribosylaminoimidazole-succinocarboxamide synthase (297 aa).

The protein belongs to the SAICAR synthetase family.

It catalyses the reaction 5-amino-1-(5-phospho-D-ribosyl)imidazole-4-carboxylate + L-aspartate + ATP = (2S)-2-[5-amino-1-(5-phospho-beta-D-ribosyl)imidazole-4-carboxamido]succinate + ADP + phosphate + 2 H(+). It functions in the pathway purine metabolism; IMP biosynthesis via de novo pathway; 5-amino-1-(5-phospho-D-ribosyl)imidazole-4-carboxamide from 5-amino-1-(5-phospho-D-ribosyl)imidazole-4-carboxylate: step 1/2. This chain is Phosphoribosylaminoimidazole-succinocarboxamide synthase (purC), found in Mycobacterium leprae (strain TN).